Consider the following 210-residue polypeptide: Thymidylate kinase (210 aa).

Position 11-18 (11-18) interacts with ATP; sequence GVDGSGKS.

The protein belongs to the thymidylate kinase family.

It carries out the reaction dTMP + ATP = dTDP + ADP. Its function is as follows. Phosphorylation of dTMP to form dTDP in both de novo and salvage pathways of dTTP synthesis. The sequence is that of Thymidylate kinase from Mycoplasmoides gallisepticum (strain R(low / passage 15 / clone 2)) (Mycoplasma gallisepticum).